Reading from the N-terminus, the 277-residue chain is Large ribosomal subunit protein uL15c (277 aa).

A chloroplast-targeting transit peptide spans 1 to 67 (MATPLSISSN…FARPLVVVSQ (67 aa)). Position 68 is an N-acetylthreonine (T68). A disordered region spans residues 81-125 (FRLDNLGPQPGSRKKQKRKGRGISAGQGASCGFGMRGQKSRSGPG). Over residues 92–101 (SRKKQKRKGR) the composition is skewed to basic residues. The span at 103-115 (ISAGQGASCGFGM) shows a compositional bias: gly residues.

It belongs to the universal ribosomal protein uL15 family. In terms of assembly, part of the 50S ribosomal subunit.

The protein localises to the plastid. The protein resides in the chloroplast. In Arabidopsis thaliana (Mouse-ear cress), this protein is Large ribosomal subunit protein uL15c (RPL15).